The primary structure comprises 503 residues: Sodium/hydrogen exchanger 3 (503 aa).

The Cytoplasmic portion of the chain corresponds to 1-22; that stretch reads MVIGLSTMLEKTEALFASDHAS. The chain crosses the membrane as a helical span at residues 23-43; it reads VVSMNLFVALLCACIVLGHLL. Residues 44 to 51 are Vacuolar-facing; it reads EETRWMNE. The N-linked (GlcNAc...) asparagine glycan is linked to N50. A helical membrane pass occupies residues 52–72; that stretch reads SITALIIGSCTGIVILLISGG. Over 73–76 the chain is Cytoplasmic; the sequence is KSSR. The segment at residues 77–97 is an intramembrane region (helical); the sequence is ILVFSEDLFFIYLLPPIIFNA. The Cytoplasmic segment spans residues 98–109; it reads GFQVKKKQFFRN. The chain crosses the membrane as a helical span at residues 110-130; sequence FMTIMLFGAIGTLISFVIISF. Residues 131-138 lie on the Vacuolar side of the membrane; that stretch reads GAKHLFEK. A helical transmembrane segment spans residues 139 to 159; the sequence is MNIGDLTIADYLAIGAIFSAT. The Cytoplasmic portion of the chain corresponds to 160-174; it reads DSVCTLQVLNQDETP. The chain crosses the membrane as a helical span at residues 175–195; the sequence is LLYSLVFGEGVVNDATSVVLF. Residues 196 to 219 are Vacuolar-facing; the sequence is NAIQRFDLTNINSAIALEFAGNFF. The helical transmembrane segment at 220–240 threads the bilayer; sequence YLFILSTALGVAAGLLSAFVI. Residues 241–265 are Cytoplasmic-facing; that stretch reads KKLYIGRHSTDREVALMMLLAYLSY. The helical transmembrane segment at 266–286 threads the bilayer; the sequence is MLAELFHLSSILTVFFCGIVM. Topologically, residues 287–305 are vacuolar; that stretch reads SHYTWHNVTDKSKVTTKHT. An N-linked (GlcNAc...) asparagine glycan is attached at N293. The chain crosses the membrane as a helical span at residues 306–326; it reads FAAMSFLAEIFIFLYVGMDAL. Residues 327 to 345 are Cytoplasmic-facing; the sequence is DIEKWDVVRNSPGQSIGVS. The helical transmembrane segment at 346 to 366 threads the bilayer; the sequence is SILLGLILLGRAAFVFPLSFL. Residues 367 to 383 are Vacuolar-facing; the sequence is SNLTKSSPDEKIDLKKQ. An N-linked (GlcNAc...) asparagine glycan is attached at N368. The helical transmembrane segment at 384 to 406 threads the bilayer; the sequence is VTIWWAGLMRGAVSMALAYNQFT. Residues 407–416 are Cytoplasmic-facing; that stretch reads TSGHTKVLGN. The helical transmembrane segment at 417-437 threads the bilayer; it reads AIMITSTITVVLFSTVVFGLL. The Vacuolar segment spans residues 438–503; sequence TKPLVKHLQP…FWKSPSRFTH (66 aa).

Belongs to the monovalent cation:proton antiporter 1 (CPA1) transporter (TC 2.A.36) family. Expressed in roots.

It localises to the vacuole membrane. The enzyme catalyses Na(+)(in) + H(+)(out) = Na(+)(out) + H(+)(in). It carries out the reaction K(+)(in) + H(+)(out) = K(+)(out) + H(+)(in). May act in low affinity electroneutral exchange of protons for cations such as Na(+) or K(+) across membranes. May also exchange Li(+) and Cs(+) with a lower affinity. The chain is Sodium/hydrogen exchanger 3 (NHX3) from Arabidopsis thaliana (Mouse-ear cress).